The primary structure comprises 257 residues: Zinc import ATP-binding protein ZnuC (257 aa).

Residues 6 to 221 (VRLEQITVAF…AFVETFGHQV (216 aa)) enclose the ABC transporter domain. 38–45 (GPNGAGKT) contributes to the ATP binding site.

This sequence belongs to the ABC transporter superfamily. Zinc importer (TC 3.A.1.15.5) family. As to quaternary structure, the complex is composed of two ATP-binding proteins (ZnuC), two transmembrane proteins (ZnuB) and a solute-binding protein (ZnuA).

It is found in the cell inner membrane. It carries out the reaction Zn(2+)(out) + ATP(in) + H2O(in) = Zn(2+)(in) + ADP(in) + phosphate(in) + H(+)(in). Its function is as follows. Part of the ABC transporter complex ZnuABC involved in zinc import. Responsible for energy coupling to the transport system. In Marinobacter nauticus (strain ATCC 700491 / DSM 11845 / VT8) (Marinobacter aquaeolei), this protein is Zinc import ATP-binding protein ZnuC.